We begin with the raw amino-acid sequence, 129 residues long: Gas vesicle protein C (129 aa).

3 consecutive repeats follow at residues 19 to 51 (VTQLFRETHEFLSATTAHRQEQAKQQAQQLHQF), 52 to 84 (HQNLEQTTHEFLTETTTQRVAQAEAQANFLHKF), and 85 to 117 (HQNLEQTTQEFLAETAKNRTEQAKAQSQYLQQF). The tract at residues 19 to 117 (VTQLFRETHE…KAQSQYLQQF (99 aa)) is 3 X 33 AA tandem repeats.

Belongs to the gas vesicle GvpC family.

The protein resides in the gas vesicle. Functionally, confers stability, involved in shaping gas vesicles, hollow, gas filled proteinaceous nanostructures. During planktonic growth they allow positioning of the organism at a favorable depth for light or nutrient acquisition. In terms of biological role, cluster expression in E.coli (gvpA1-gvpA2-gvpC-gvpN-gvpJ-gvpK-gvpF-gvpG-gvpV-gvpW) allows cells to float and produces irregularly shaped gas vesicles. This chain is Gas vesicle protein C, found in Nostoc sp. (strain PCC 7120 / SAG 25.82 / UTEX 2576).